Consider the following 278-residue polypeptide: Undecaprenyl-diphosphatase 1 (278 aa).

Transmembrane regions (helical) follow at residues 85 to 105, 108 to 128, 188 to 208, 218 to 238, and 254 to 274; these read LNVI…EKTI, ALFS…VILW, VATE…TAYE, VDAL…AFAC, and FAWY…SGAL.

The protein belongs to the UppP family.

It is found in the cell inner membrane. It carries out the reaction di-trans,octa-cis-undecaprenyl diphosphate + H2O = di-trans,octa-cis-undecaprenyl phosphate + phosphate + H(+). Catalyzes the dephosphorylation of undecaprenyl diphosphate (UPP). Confers resistance to bacitracin. This is Undecaprenyl-diphosphatase 1 from Paraburkholderia xenovorans (strain LB400).